We begin with the raw amino-acid sequence, 106 residues long: Glutaredoxin-1 (106 aa).

The residue at position 2 (Ala-2) is an N-acetylalanine. In terms of domain architecture, Glutaredoxin spans Gln-3–Lys-106. N6-succinyllysine is present on Lys-9. Disulfide bonds link Cys-23–Cys-26 and Cys-79–Cys-83.

This sequence belongs to the glutaredoxin family.

It is found in the cytoplasm. Its function is as follows. Has a glutathione-disulfide oxidoreductase activity in the presence of NADPH and glutathione reductase. Reduces low molecular weight disulfides and proteins. This chain is Glutaredoxin-1 (GLRX), found in Sus scrofa (Pig).